The sequence spans 387 residues: Protein RecA (387 aa).

80-87 is a binding site for ATP; it reads GPESSGKT. The interval 348 to 387 is disordered; the sequence is LDDSEVAETEEETTASKTKAKAKKEEKAVETEEIELELED. 2 stretches are compositionally biased toward acidic residues: residues 349-360 and 378-387; these read DDSEVAETEEET and TEEIELELED.

Belongs to the RecA family.

It is found in the cytoplasm. Functionally, can catalyze the hydrolysis of ATP in the presence of single-stranded DNA, the ATP-dependent uptake of single-stranded DNA by duplex DNA, and the ATP-dependent hybridization of homologous single-stranded DNAs. It interacts with LexA causing its activation and leading to its autocatalytic cleavage. This is Protein RecA from Lactococcus lactis subsp. cremoris (strain MG1363).